We begin with the raw amino-acid sequence, 194 residues long: NAD(P)H-quinone oxidoreductase subunit I (194 aa).

2 consecutive 4Fe-4S ferredoxin-type domains span residues 55–84 (GRIH…VDWE) and 95–124 (NHYS…MTEE). Residues cysteine 64, cysteine 67, cysteine 70, cysteine 74, cysteine 104, cysteine 107, cysteine 110, and cysteine 114 each coordinate [4Fe-4S] cluster. The interval 173-194 (DLPANAPRPGARPEDLVEKTEA) is disordered. Residues 183–194 (ARPEDLVEKTEA) show a composition bias toward basic and acidic residues.

The protein belongs to the complex I 23 kDa subunit family. As to quaternary structure, NDH-1 is composed of at least 11 different subunits. [4Fe-4S] cluster is required as a cofactor.

It localises to the cellular thylakoid membrane. The enzyme catalyses a plastoquinone + NADH + (n+1) H(+)(in) = a plastoquinol + NAD(+) + n H(+)(out). It catalyses the reaction a plastoquinone + NADPH + (n+1) H(+)(in) = a plastoquinol + NADP(+) + n H(+)(out). NDH-1 shuttles electrons from an unknown electron donor, via FMN and iron-sulfur (Fe-S) centers, to quinones in the respiratory and/or the photosynthetic chain. The immediate electron acceptor for the enzyme in this species is believed to be plastoquinone. Couples the redox reaction to proton translocation, and thus conserves the redox energy in a proton gradient. The chain is NAD(P)H-quinone oxidoreductase subunit I from Nostoc sp. (strain PCC 7120 / SAG 25.82 / UTEX 2576).